Reading from the N-terminus, the 392-residue chain is MTEEFNESMINDIKEGDKVTGEVQQVEDKQVVVHINGGKFNGIIPISQLSTHHIENPSEVVKQGDEIEAYVTKIEVDEENDSGVYILSKRQLETEKSYEYLQEKLDNDEIIEAKVTEVVKGGLVVDVGQRGFVPASLISTDFIEDFSVFDGQTIRIKVEELDPENNRVILSRKAVEQAENDVKKASLLESLNAGDVIKGKVARLTNFGAFVDIGGVDGLVHVSELSHEHVDSPEDVVSVGQEVDVKVKSVEKDAERISLSIKDTLPTPFESIKGQFHEDDVIEGKVVRLANFGAFVEIAPGVQGLVHISEIAHEHIGTPGEKLEPGQQVNVKILGIDEENERISLSIKATLPKEDVVESDDATTQSYLSNDSIEDNPTLGDVFGDKFKDLKF.

4 consecutive S1 motif domains span residues 16-90 (GDKV…LSKR), 108-173 (DEII…LSRK), 194-262 (GDVI…LSIK), and 279-348 (DDVI…LSIK).

Belongs to the bacterial ribosomal protein bS1 family.

In terms of biological role, binds mRNA; thus facilitating recognition of the initiation point. It is needed to translate mRNA with a short Shine-Dalgarno (SD) purine-rich sequence. The polypeptide is Small ribosomal subunit protein bS1 (rpsA) (Staphylococcus haemolyticus (strain JCSC1435)).